Reading from the N-terminus, the 353-residue chain is Chorismate synthase (353 aa).

Residue Arg48 coordinates NADP(+). FMN is bound by residues 125-127, 238-239, Gly278, 293-297, and Arg319; these read RSS, NA, and KPTSS.

The protein belongs to the chorismate synthase family. In terms of assembly, homotetramer. FMNH2 is required as a cofactor.

The enzyme catalyses 5-O-(1-carboxyvinyl)-3-phosphoshikimate = chorismate + phosphate. Its pathway is metabolic intermediate biosynthesis; chorismate biosynthesis; chorismate from D-erythrose 4-phosphate and phosphoenolpyruvate: step 7/7. In terms of biological role, catalyzes the anti-1,4-elimination of the C-3 phosphate and the C-6 proR hydrogen from 5-enolpyruvylshikimate-3-phosphate (EPSP) to yield chorismate, which is the branch point compound that serves as the starting substrate for the three terminal pathways of aromatic amino acid biosynthesis. This reaction introduces a second double bond into the aromatic ring system. This Buchnera aphidicola subsp. Cinara cedri (strain Cc) protein is Chorismate synthase.